The following is a 647-amino-acid chain: Acetyl-coenzyme A synthetase (647 aa).

Residues 192–195, threonine 310, and asparagine 334 contribute to the CoA site; that span reads RGGR. Residues 386–388, 410–415, aspartate 499, and arginine 514 each bind ATP; these read GEP and DTWWQT. Serine 522 contacts CoA. An ATP-binding site is contributed by arginine 525. The Mg(2+) site is built by valine 536, histidine 538, and valine 541. Position 583 (arginine 583) interacts with CoA. Lysine 608 is subject to N6-acetyllysine.

The protein belongs to the ATP-dependent AMP-binding enzyme family. Mg(2+) serves as cofactor. In terms of processing, acetylated. Deacetylation by the SIR2-homolog deacetylase activates the enzyme.

It catalyses the reaction acetate + ATP + CoA = acetyl-CoA + AMP + diphosphate. In terms of biological role, catalyzes the conversion of acetate into acetyl-CoA (AcCoA), an essential intermediate at the junction of anabolic and catabolic pathways. AcsA undergoes a two-step reaction. In the first half reaction, AcsA combines acetate with ATP to form acetyl-adenylate (AcAMP) intermediate. In the second half reaction, it can then transfer the acetyl group from AcAMP to the sulfhydryl group of CoA, forming the product AcCoA. This is Acetyl-coenzyme A synthetase from Caulobacter vibrioides (strain ATCC 19089 / CIP 103742 / CB 15) (Caulobacter crescentus).